Here is a 232-residue protein sequence, read N- to C-terminus: Ribonuclease 3 (232 aa).

One can recognise an RNase III domain in the interval 9 to 131 (INLLQKKLGY…IIGGIFLDSN (123 aa)). Glutamate 44 serves as a coordination point for Mg(2+). Residue aspartate 48 is part of the active site. Mg(2+) is bound by residues aspartate 117 and glutamate 120. Glutamate 120 is a catalytic residue. Positions 158-228 (DPKTRLQEYL…AENALKFLIE (71 aa)) constitute a DRBM domain.

The protein belongs to the ribonuclease III family. Homodimer. It depends on Mg(2+) as a cofactor.

Its subcellular location is the cytoplasm. The enzyme catalyses Endonucleolytic cleavage to 5'-phosphomonoester.. Functionally, digests double-stranded RNA. Involved in the processing of primary rRNA transcript to yield the immediate precursors to the large and small rRNAs (23S and 16S). Processes some mRNAs, and tRNAs when they are encoded in the rRNA operon. Processes pre-crRNA and tracrRNA of type II CRISPR loci if present in the organism. The chain is Ribonuclease 3 from Blochmanniella floridana.